The chain runs to 333 residues: Zinc-type alcohol dehydrogenase-like protein SACOL2177 (333 aa).

Belongs to the zinc-containing alcohol dehydrogenase family. Quinone oxidoreductase subfamily.

This chain is Zinc-type alcohol dehydrogenase-like protein SACOL2177, found in Staphylococcus aureus (strain COL).